The chain runs to 693 residues: Elongation factor G (693 aa).

In terms of domain architecture, tr-type G spans 9–283; the sequence is ERVRNIGIIA…AVCDYLPSPL (275 aa). Residues 18 to 25, 82 to 86, and 136 to 139 each bind GTP; these read AHIDAGKT, DTPGH, and NKMD.

This sequence belongs to the TRAFAC class translation factor GTPase superfamily. Classic translation factor GTPase family. EF-G/EF-2 subfamily.

It is found in the cytoplasm. Its function is as follows. Catalyzes the GTP-dependent ribosomal translocation step during translation elongation. During this step, the ribosome changes from the pre-translocational (PRE) to the post-translocational (POST) state as the newly formed A-site-bound peptidyl-tRNA and P-site-bound deacylated tRNA move to the P and E sites, respectively. Catalyzes the coordinated movement of the two tRNA molecules, the mRNA and conformational changes in the ribosome. In Dehalococcoides mccartyi (strain ATCC BAA-2100 / JCM 16839 / KCTC 5957 / BAV1), this protein is Elongation factor G.